A 122-amino-acid polypeptide reads, in one-letter code: Large ribosomal subunit protein uL18 (122 aa).

Belongs to the universal ribosomal protein uL18 family. Part of the 50S ribosomal subunit; part of the 5S rRNA/L5/L18/L25 subcomplex. Contacts the 5S and 23S rRNAs.

In terms of biological role, this is one of the proteins that bind and probably mediate the attachment of the 5S RNA into the large ribosomal subunit, where it forms part of the central protuberance. This Lachnospira eligens (strain ATCC 27750 / DSM 3376 / VPI C15-48 / C15-B4) (Eubacterium eligens) protein is Large ribosomal subunit protein uL18.